A 234-amino-acid polypeptide reads, in one-letter code: UPF0173 metal-dependent hydrolase Msp_0516 (234 aa).

This sequence belongs to the UPF0173 family.

The sequence is that of UPF0173 metal-dependent hydrolase Msp_0516 from Methanosphaera stadtmanae (strain ATCC 43021 / DSM 3091 / JCM 11832 / MCB-3).